We begin with the raw amino-acid sequence, 162 residues long: MGLETEKADVQLFMDDDSYSHHSGLEYADPEKFADSGQDRDPHRLNSHLKLGFEDVIAEPVTTHSFDKVWICSHALFEISKYVMYKFLTVFLAIPLAFIAGILFATLSCLHIWILMPFVKTCLMVLPSVQTIWKSVTDVIIAPLCTSVGRSFSSVSLQLSQD.

The Cytoplasmic segment spans residues 1 to 86 (MGLETEKADV…FEISKYVMYK (86 aa)). Tyr19 is subject to Phosphotyrosine; by SRC. Phosphoserine is present on residues Ser20 and Ser23. Tyr27 is subject to Phosphotyrosine; by SRC. Position 36 is a phosphoserine (Ser36). Residues 87 to 107 (FLTVFLAIPLAFIAGILFATL) constitute an intramembrane region (helical). The Cytoplasmic portion of the chain corresponds to 108-162 (SCLHIWILMPFVKTCLMVLPSVQTIWKSVTDVIIAPLCTSVGRSFSSVSLQLSQD).

This sequence belongs to the caveolin family. As to quaternary structure, monomer or homodimer. Interacts with CAV1; the interaction forms a stable heterooligomeric complex that is required for targeting to lipid rafts and for caveolae formation. Tyrosine phosphorylated forms do not form heterooligomers with the Tyr-19-phosphorylated form existing as a monomer or dimer, and the Tyr-27-form as a monomer only. Interacts (tyrosine phosphorylated form) with the SH2 domain-containing proteins, RASA1, NCK1 and SRC. Interacts (tyrosine phosphorylated form) with INSR, the interaction (Tyr-27-phosphorylated form) is increased on insulin stimulation. Interacts (Tyr-19 phosphorylated form) with MAPK1 (phosphorylated form); the interaction, promoted by insulin, leads to nuclear location and MAPK1 activation. Interacts with STAT3; the interaction is increased on insulin-induced tyrosine phosphorylation leading to STAT activation. Phosphorylated on serine and tyrosine residues. CAV1 promotes phosphorylation on Ser-23 which then targets the complex to the plasma membrane, lipid rafts and caveolae. Phosphorylation on Ser-36 appears to modulate mitosis in endothelial cells. Phosphorylation on both Tyr-19 and Tyr-27 is required for insulin-induced 'Ser-727' phosphorylation of STAT3 and its activation. Phosphorylation on Tyr-19 is required for insulin-induced phosphorylation of MAPK1 and DNA binding of STAT3. Tyrosine phosphorylation is induced by both EGF and insulin (By. similarity).

It localises to the nucleus. It is found in the cytoplasm. The protein resides in the golgi apparatus membrane. Its subcellular location is the cell membrane. The protein localises to the membrane. It localises to the caveola. May act as a scaffolding protein within caveolar membranes. Interacts directly with G-protein alpha subunits and can functionally regulate their activity. Acts as an accessory protein in conjunction with CAV1 in targeting to lipid rafts and driving caveolae formation. The Ser-36 phosphorylated form has a role in modulating mitosis in endothelial cells. Positive regulator of cellular mitogenesis of the MAPK signaling pathway. Required for the insulin-stimulated nuclear translocation and activation of MAPK1 and STAT3, and the subsequent regulation of cell cycle progression. The protein is Caveolin-2 (CAV2) of Pongo abelii (Sumatran orangutan).